Here is a 667-residue protein sequence, read N- to C-terminus: Probable endo-1,3(4)-beta-glucanase AFLA_105200 (667 aa).

The first 24 residues, 1 to 24 (MSSSSFVWTVGSIALSSLITPTIA), serve as a signal peptide directing secretion. The GH16 domain occupies 25-288 (DGSGSRYQLT…WAGGVFGDSG (264 aa)). A glycan (N-linked (GlcNAc...) asparagine) is linked at N63. The active-site Nucleophile is E144. Residue E149 is the Proton donor of the active site. Composition is skewed to polar residues over residues 354 to 363 (VPSVTSTPIL) and 379 to 394 (ATSSAVPEPANPQTSV). Disordered stretches follow at residues 354 to 427 (VPSV…ADAV) and 448 to 646 (GTIQ…AGAS). Low complexity-rich tracts occupy residues 395 to 427 (AGAETTAAPAPSPETTAAPASPSSDDSEGADAV), 448 to 483 (GTIQTIGGGETEVSPASSTVESAATPAAPTPTSQEP), and 574 to 622 (APTS…EATA). Over residues 623–637 (PTETDSGASTGTNPE) the composition is skewed to polar residues. G644 carries the GPI-anchor amidated glycine lipid modification. Positions 645–667 (ASKSVGISGLAGIVCGIAMAMLA) are cleaved as a propeptide — removed in mature form.

This sequence belongs to the glycosyl hydrolase 16 family.

It is found in the cell membrane. It catalyses the reaction Endohydrolysis of (1-&gt;3)- or (1-&gt;4)-linkages in beta-D-glucans when the glucose residue whose reducing group is involved in the linkage to be hydrolyzed is itself substituted at C-3.. Its function is as follows. Mixed-linked glucanase involved in the degradation of complex natural cellulosic substrates. The protein is Probable endo-1,3(4)-beta-glucanase AFLA_105200 of Aspergillus flavus (strain ATCC 200026 / FGSC A1120 / IAM 13836 / NRRL 3357 / JCM 12722 / SRRC 167).